The chain runs to 691 residues: Pre-mRNA-splicing factor CLF1 (691 aa).

HAT repeat units follow at residues 52–84 (EYQG…WELE), 86–118 (KEYA…AELK), 120–152 (RNIN…VEEM), 154–185 (GNIP…LEQR), 187–218 (GEYD…FEEE), 220–258 (GTSD…YEAK), 260–294 (HDLD…FEKQ), 304–336 (VVLS…LEEA), 338–372 (GDID…LWIF), 382–418 (KNPE…FEIR), 420–451 (GDLA…MEQK), 453–485 (YEFG…LERG), 487–521 (DDLD…FEEE), 523–554 (GEYD…FEIN), 574–612 (EAKA…FEKT), and 617–650 (EDIE…YIFP).

The protein belongs to the crooked-neck family. As to quaternary structure, associated with the spliceosome.

Its subcellular location is the nucleus. Its function is as follows. Involved in pre-mRNA splicing and cell cycle progression. Required for the spliceosome assembly and initiation of the DNA replication. The chain is Pre-mRNA-splicing factor CLF1 (CLF1) from Pyricularia oryzae (strain 70-15 / ATCC MYA-4617 / FGSC 8958) (Rice blast fungus).